Reading from the N-terminus, the 324-residue chain is NADH-cytochrome b5 reductase 1 (324 aa).

A helical transmembrane segment spans residues 49–69 (LNIVLAFVVGLIGSVVVLLYF). The FAD-binding FR-type domain occupies 81 to 184 (TQWQQYRLME…KGPKGQMRYA (104 aa)). FAD-binding positions include 164 to 179 (GSMKIGDLLSVKGPKG) and 190 to 222 (HIGMIAGGTGLTPCLQIIRAALKNPADKTQIDF).

The protein belongs to the flavoprotein pyridine nucleotide cytochrome reductase family. In terms of assembly, monomer. Component of the 2-(3-amino-3-carboxypropyl)histidine synthase complex composed of DPH1, DPH2, DPH3 and a NADH-dependent reductase, predominantly CBR1. It depends on FAD as a cofactor.

Its subcellular location is the mitochondrion outer membrane. It carries out the reaction 2 Fe(III)-[cytochrome b5] + NADH = 2 Fe(II)-[cytochrome b5] + NAD(+) + H(+). The catalysed reaction is 2 Fe(3+)-[Dph3] + NADH = 2 Fe(2+)-[Dph3] + NAD(+) + H(+). The protein operates within protein modification; peptidyl-diphthamide biosynthesis. Its function is as follows. NADH-dependent reductase for DPH3 and cytochrome b5. Required for the first step of diphthamide biosynthesis, a post-translational modification of histidine which occurs in elongation factor 2. DPH1 and DPH2 transfer a 3-amino-3-carboxypropyl (ACP) group from S-adenosyl-L-methionine (SAM) to a histidine residue, the reaction is assisted by a reduction system comprising DPH3 and a NADH-dependent reductase, predominantly CBR1. By reducing DPH3, also involved in the formation of the tRNA wobble base modification mcm5s 2U (5-methoxycarbonylmethyl-2-thiouridine), mediated by the elongator complex. The cytochrome b5/NADH cytochrome b5 reductase electron transfer system supports the catalytic activity of several sterol biosynthetic enzymes. The protein is NADH-cytochrome b5 reductase 1 (CBR1) of Mycosarcoma maydis (Corn smut fungus).